Consider the following 446-residue polypeptide: MELFAEKRILTVSQLNGLIRGVLEENFEQVWVEGEISNLAMPHSGHLYFTLKDAGAQVRCVMFRASSRALKFKPKDGMGLIVRGRVSVFEPRGEYQLIVEYLEPQGIGALQLAFIQLKERLAKEGLFAETHKKPIPKLPQRIGVVTSATGAAIHDILNVLNRRFANVQVLIRPVKVQGEGAAGEIAAAIRDFNRYREIDVMIVGRGGGSLEDLWAFNEEVVARAIYESKIPVISAVGHEIDFTIADFVADLRAPTPSAAAELVVKSKAELASDLDALSHRLVLAMRHCLEDCWGDVNGLTRALKDPSLLLGHLAQRVDDLDERIKHAVQVMLLRRKEKAAFLQNRLRLQNPALQVEQGKELLLGYCARMENTMERLLERARQAAAVSAGKLHALSPLATLARGYSIVRKLPDMSVISDSSQVEPGDLLDLTFQQGGAHCRVETKHD.

The protein belongs to the XseA family. As to quaternary structure, heterooligomer composed of large and small subunits.

It is found in the cytoplasm. The enzyme catalyses Exonucleolytic cleavage in either 5'- to 3'- or 3'- to 5'-direction to yield nucleoside 5'-phosphates.. In terms of biological role, bidirectionally degrades single-stranded DNA into large acid-insoluble oligonucleotides, which are then degraded further into small acid-soluble oligonucleotides. This chain is Exodeoxyribonuclease 7 large subunit, found in Geotalea uraniireducens (strain Rf4) (Geobacter uraniireducens).